Consider the following 75-residue polypeptide: Dermaseptin-SP5 (75 aa).

Positions 1–22 (MAFLKKSLFLVLFLGLVSLSMC) are cleaved as a signal peptide. Positions 23–45 (EEEKRENEVEEEQEDDEQSELRR) are excised as a propeptide. A disordered region spans residues 26-46 (KRENEVEEEQEDDEQSELRRS). Residues 30–40 (EVEEEQEDDEQ) are compositionally biased toward acidic residues. Proline amide is present on proline 72. Residues 74–75 (EQ) constitute a propeptide that is removed on maturation.

The protein belongs to the frog skin active peptide (FSAP) family. Dermaseptin subfamily. As to expression, expressed by the skin glands.

It localises to the secreted. The protein localises to the target cell membrane. Functionally, antimicrobial peptide with weak activity against Gram-positive and Gram-negative bacteria and fungi. Has been tested against E.coli (MIC=96.06-256 uM), S.aureus (MIC&gt;192.12 uM), K.pneumoniae (MIC&gt;189.00 uM) and C.albicans (MIC=384.24-1024 uM). Probably acts by disturbing membrane functions with its alpha-helical amphipathic structure. May penetrate bacterial membranes, but stay at the mammalian membrane surface. Does not show hemolytic activity. Does not interact at all with cardiolipin. This Agalychnis spurrelli (Gliding leaf frog) protein is Dermaseptin-SP5.